The chain runs to 332 residues: Glycerol-3-phosphate dehydrogenase [NAD(P)+] (332 aa).

Serine 11, phenylalanine 12, lysine 32, and lysine 106 together coordinate NADPH. Lysine 106, glycine 137, and serine 139 together coordinate sn-glycerol 3-phosphate. Alanine 141 lines the NADPH pocket. Sn-glycerol 3-phosphate contacts are provided by lysine 192, aspartate 245, serine 255, arginine 256, and asparagine 257. Lysine 192 (proton acceptor) is an active-site residue. Arginine 256 is an NADPH binding site. Positions 280 and 282 each coordinate NADPH.

Belongs to the NAD-dependent glycerol-3-phosphate dehydrogenase family.

The protein localises to the cytoplasm. The enzyme catalyses sn-glycerol 3-phosphate + NAD(+) = dihydroxyacetone phosphate + NADH + H(+). It carries out the reaction sn-glycerol 3-phosphate + NADP(+) = dihydroxyacetone phosphate + NADPH + H(+). It participates in membrane lipid metabolism; glycerophospholipid metabolism. Functionally, catalyzes the reduction of the glycolytic intermediate dihydroxyacetone phosphate (DHAP) to sn-glycerol 3-phosphate (G3P), the key precursor for phospholipid synthesis. The polypeptide is Glycerol-3-phosphate dehydrogenase [NAD(P)+] (Staphylococcus aureus (strain USA300)).